The chain runs to 94 residues: UPF0298 protein SEQ_1830 (94 aa).

It belongs to the UPF0298 family.

It localises to the cytoplasm. The protein is UPF0298 protein SEQ_1830 of Streptococcus equi subsp. equi (strain 4047).